We begin with the raw amino-acid sequence, 1377 residues long: Zinc finger MYM-type protein 2 (1377 aa).

Glycyl lysine isopeptide (Lys-Gly) (interchain with G-Cter in SUMO2) cross-links involve residues lysine 48, lysine 88, lysine 98, and lysine 104. Composition is skewed to polar residues over residues 85–115 and 127–138; these read TSSK…SVSE and TNQGQEKNSSNF. The tract at residues 85–177 is disordered; it reads TSSKNEELQG…GMGNSGITTE (93 aa). A compositionally biased stretch (basic and acidic residues) spans 139–152; the sequence is IERRPPETKNRTND. Lysine 147 participates in a covalent cross-link: Glycyl lysine isopeptide (Lys-Gly) (interchain with G-Cter in SUMO2). Over residues 153-164 the composition is skewed to polar residues; it reads VDFSTSSFSRSK. Phosphoserine is present on serine 159. Residues lysine 253 and lysine 297 each participate in a glycyl lysine isopeptide (Lys-Gly) (interchain with G-Cter in SUMO2) cross-link. The segment at 273-305 is disordered; that stretch reads NGESATHHNPDSWISQSASFPRNQKQPGVDSLS. Residues 284–298 show a composition bias toward polar residues; sequence SWISQSASFPRNQKQ. Position 305 is a phosphoserine (serine 305). Glycyl lysine isopeptide (Lys-Gly) (interchain with G-Cter in SUMO2) cross-links involve residues lysine 312, lysine 325, lysine 348, and lysine 366. An MYM-type 1 zinc finger spans residues 327–363; that stretch reads VKVTCANCKKPLQKGQTAYQRKGSAHLFCSTTCLSSF. The segment at 369–409 adopts an MYM-type 2 zinc-finger fold; that stretch reads PKKLCVMCKKDITTMKGTIVAQVDSSESFQEFCSTSCLSLY. Glycyl lysine isopeptide (Lys-Gly) (interchain with G-Cter in SUMO2) cross-links involve residues lysine 417, lysine 441, lysine 491, lysine 503, lysine 513, lysine 529, and lysine 532. 2 MYM-type zinc fingers span residues 421 to 456 and 463 to 502; these read NKSR…FNRY and IMNC…VSEY. The segment at 533–570 adopts an MYM-type 5 zinc-finger fold; that stretch reads LTTCTGCRTQCRFFDMTQCIGPNGYMEPYCSTACMNSH. Glycyl lysine isopeptide (Lys-Gly) (interchain with G-Cter in SUMO2) cross-links involve residues lysine 576, lysine 603, lysine 649, lysine 658, lysine 688, lysine 700, and lysine 709. The segment at 636-671 adopts an MYM-type 6 zinc-finger fold; sequence QLKCNYCKNSFCSKPEILEWENKVHQFCSKTCSDDY. 2 MYM-type zinc fingers span residues 723–758 and 764–799; these read RCVT…CKKF and KAAR…LLRF. Residues lysine 764, lysine 788, lysine 812, and lysine 829 each participate in a glycyl lysine isopeptide (Lys-Gly) (interchain with G-Cter in SUMO2) cross-link. Phosphoserine is present on residues serine 838 and serine 958. Disordered stretches follow at residues 983–1002 and 1028–1064; these read LLKN…PYEP and VFGE…SDNS. The span at 1039 to 1050 shows a compositional bias: basic residues; sequence PRSKKKGAKRKA. Residue serine 1064 is modified to Phosphoserine. Residue threonine 1376 is modified to Phosphothreonine.

As to quaternary structure, can form homodimers. May be a component of a BHC histone deacetylase complex that contains HDAC1, HDAC2, HMG20B/BRAF35, KDM1A, RCOR1/CoREST, PHF21A/BHC80, ZMYM2, ZNF217, ZMYM3, GSE1 and GTF2I. Interacts with FOXP1 and FOXP2.

The protein resides in the nucleus. Functionally, involved in the negative regulation of transcription. This Homo sapiens (Human) protein is Zinc finger MYM-type protein 2 (ZMYM2).